Consider the following 486-residue polypeptide: Malonate-semialdehyde dehydrogenase (486 aa).

NAD(+) is bound by residues Phe-154, Lys-178, Glu-181, Arg-182, and Ser-231. Cys-286 serves as the catalytic Nucleophile. Residue Glu-386 participates in NAD(+) binding.

It belongs to the aldehyde dehydrogenase family. IolA subfamily. As to quaternary structure, homotetramer.

It catalyses the reaction 3-oxopropanoate + NAD(+) + CoA + H2O = hydrogencarbonate + acetyl-CoA + NADH + H(+). The enzyme catalyses 2-methyl-3-oxopropanoate + NAD(+) + CoA + H2O = propanoyl-CoA + hydrogencarbonate + NADH + H(+). The protein operates within polyol metabolism; myo-inositol degradation into acetyl-CoA; acetyl-CoA from myo-inositol: step 7/7. In terms of biological role, catalyzes the oxidation of malonate semialdehyde (MSA) and methylmalonate semialdehyde (MMSA) into acetyl-CoA and propanoyl-CoA, respectively. Is involved in a myo-inositol catabolic pathway. Bicarbonate, and not CO2, is the end-product of the enzymatic reaction. This Bacillus cereus (strain AH187) protein is Malonate-semialdehyde dehydrogenase.